A 467-amino-acid polypeptide reads, in one-letter code: Transcription factor bHLH3 (467 aa).

Residues 316–365 form the bHLH domain; that stretch reads EEALNHVEAERQRREKLNQRFYALRAVVPNISKMDKASLLADAITYITDM.

As to quaternary structure, homodimer.

It localises to the nucleus. The protein is Transcription factor bHLH3 (BHLH3) of Arabidopsis thaliana (Mouse-ear cress).